The following is a 399-amino-acid chain: Glutamine synthetase 1, mitochondrial (399 aa).

Residues 1-27 constitute a mitochondrion transit peptide; sequence MALRVAGLFLKKELVAPATQQLRLLRT. The region spanning 62–143 is the GS beta-grasp domain; the sequence is VQATYLWIDG…VLCDTYSADG (82 aa). The GS catalytic domain maps to 150-399; the sequence is KRAAFQAAID…AIVRTCLLNE (250 aa).

Belongs to the glutamine synthetase family. Homooctamer.

The protein localises to the mitochondrion. The enzyme catalyses L-glutamate + NH4(+) + ATP = L-glutamine + ADP + phosphate + H(+). The sequence is that of Glutamine synthetase 1, mitochondrial (Gs1) from Drosophila melanogaster (Fruit fly).